A 273-amino-acid chain; its full sequence is MHLRLISWFFIILNFMEYIGSQNASRGRRQRRMHPNVSQGCQGGCATCSDYNGCLSCKPKLFFVLERIGMKQIGVCLSSCPSGYYGTRYPDINKCTKCKADCDTCFNKNFCTKCKSGFYLHLGKCLDNCPEGLEANNHTMECVSIVHCEASEWSPWSPCTKKGKTCGFKRGTETRVREIIQHPSAKGNLCPPTSEARKCTVQRKKCPKGERGRKGRERKRKKPNKEESKDAIPDNKGLEPSRETPEQRENKQQQKKRKVQDKQQKSVSVSTVH.

Positions 1 to 21 (MHLRLISWFFIILNFMEYIGS) are cleaved as a signal peptide. FU repeat units lie at residues 35 to 86 (PNVS…GYYG) and 92 to 135 (INKC…GLEA). Asn36 carries N-linked (GlcNAc...) asparagine glycosylation. Cystine bridges form between Cys41-Cys48, Cys45-Cys54, Cys57-Cys76, Cys80-Cys95, Cys98-Cys105, Cys102-Cys111, Cys114-Cys125, Cys129-Cys142, Cys148-Cys190, Cys159-Cys166, and Cys199-Cys206. The region spanning 147–207 (HCEASEWSPW…KCTVQRKKCP (61 aa)) is the TSP type-1 domain. The segment at 201–273 (VQRKKCPKGE…QKSVSVSTVH (73 aa)) is disordered. Residues 213-223 (RKGRERKRKKP) show a composition bias toward basic residues. The segment covering 224–252 (NKEESKDAIPDNKGLEPSRETPEQRENKQ) has biased composition (basic and acidic residues).

The protein belongs to the R-spondin family. As to quaternary structure, interacts with the extracellular domain of FZD8 and LRP6. It however does not form a ternary complex with FZD8 and LRP6. Interacts with WNT1. Binds heparin. Interacts with LGR4, LGR5 and LGR6.

It is found in the secreted. Its function is as follows. Activator of the canonical Wnt signaling pathway by acting as a ligand for LGR4-6 receptors, which acts as a key regulator of angiogenesis. Upon binding to LGR4-6 (LGR4, LGR5 or LGR6), LGR4-6 associate with phosphorylated LRP6 and frizzled receptors that are activated by extracellular Wnt receptors, triggering the canonical Wnt signaling pathway to increase expression of target genes. Also regulates the canonical Wnt/beta-catenin-dependent pathway and non-canonical Wnt signaling by acting as an inhibitor of ZNRF3, an important regulator of the Wnt signaling pathway. Acts as a ligand for frizzled FZD8 and LRP6. May negatively regulate the TGF-beta pathway. Acts as a key regulator of angiogenesis by controlling vascular stability and pruning: acts by activating the non-canonical Wnt signaling pathway in endothelial cells. Can also amplify Wnt signaling pathway independently of LGR4-6 receptors, possibly by acting as a direct antagonistic ligand to RNF43 and ZNRF3. The sequence is that of R-spondin-3 (RSPO3) from Bos taurus (Bovine).